We begin with the raw amino-acid sequence, 187 residues long: Large ribosomal subunit protein uL6 (187 aa).

The protein belongs to the universal ribosomal protein uL6 family. Part of the 50S ribosomal subunit.

Functionally, this protein binds to the 23S rRNA, and is important in its secondary structure. It is located near the subunit interface in the base of the L7/L12 stalk, and near the tRNA binding site of the peptidyltransferase center. This is Large ribosomal subunit protein uL6 from Roseiflexus sp. (strain RS-1).